Consider the following 544-residue polypeptide: Sialidase (544 aa).

Residues Met1–Ala22 form the signal peptide. 3 BNR repeats span residues Ser239 to Lys250, Ala318 to Ala329, and Met378 to Met389. Glu399 is a catalytic residue. Substrate is bound at residue Arg415. A BNR 4 repeat occupies Ala425 to Glu436. Substrate is bound at residue Arg479. A BNR 5 repeat occupies Lys485 to Pro496.

This sequence belongs to the glycosyl hydrolase 33 family.

It localises to the periplasm. It carries out the reaction Hydrolysis of alpha-(2-&gt;3)-, alpha-(2-&gt;6)-, alpha-(2-&gt;8)- glycosidic linkages of terminal sialic acid residues in oligosaccharides, glycoproteins, glycolipids, colominic acid and synthetic substrates.. Functionally, sialidases have been suggested to be pathogenic factors in microbial infections. This is Sialidase (nanH) from Bacteroides fragilis (strain YCH46).